Reading from the N-terminus, the 120-residue chain is Spermidine export protein MdtJ (120 aa).

The next 4 helical transmembrane spans lie at 1–21 (MFYW…TLSM), 31–51 (AGFI…SFAV), 54–74 (IALG…ITIF), and 81–101 (EALS…IVLI).

Belongs to the drug/metabolite transporter (DMT) superfamily. Small multidrug resistance (SMR) (TC 2.A.7.1) family. MdtJ subfamily. Forms a complex with MdtI.

The protein localises to the cell inner membrane. Its function is as follows. Catalyzes the excretion of spermidine. This is Spermidine export protein MdtJ from Salmonella agona (strain SL483).